Consider the following 300-residue polypeptide: uncharacterized protein (300 aa).

8 consecutive transmembrane segments (helical) span residues 13–35 (LLCI…LQPL), 45–67 (MLTM…SLLS), 80–102 (WVLF…WAPL), 106–128 (GINI…WAWL), 180–202 (IPAL…IYIL), 217–236 (YWLL…SANL), 243–265 (PVSI…AVFV), and 275–294 (YFTY…EGLL).

It belongs to the EamA transporter family.

The protein localises to the cell membrane. This is an uncharacterized protein from Haemophilus influenzae (strain ATCC 51907 / DSM 11121 / KW20 / Rd).